Consider the following 317-residue polypeptide: Ribosomal RNA small subunit methyltransferase A (317 aa).

6 residues coordinate S-adenosyl-L-methionine: asparagine 37, valine 39, glycine 64, glutamate 85, aspartate 115, and asparagine 134. The tract at residues 293 to 317 (GGSDEATSTGRDARAPDISGHASAS) is disordered.

It belongs to the class I-like SAM-binding methyltransferase superfamily. rRNA adenine N(6)-methyltransferase family. RsmA subfamily.

The protein resides in the cytoplasm. It carries out the reaction adenosine(1518)/adenosine(1519) in 16S rRNA + 4 S-adenosyl-L-methionine = N(6)-dimethyladenosine(1518)/N(6)-dimethyladenosine(1519) in 16S rRNA + 4 S-adenosyl-L-homocysteine + 4 H(+). In terms of biological role, specifically dimethylates two adjacent adenosines (A1518 and A1519) in the loop of a conserved hairpin near the 3'-end of 16S rRNA in the 30S particle. May play a critical role in biogenesis of 30S subunits. The polypeptide is Ribosomal RNA small subunit methyltransferase A (Mycobacterium bovis (strain BCG / Tokyo 172 / ATCC 35737 / TMC 1019)).